Consider the following 637-residue polypeptide: Biosynthetic arginine decarboxylase (637 aa).

At K101 the chain carries N6-(pyridoxal phosphate)lysine. 286-296 (FDVGGGLAVDY) serves as a coordination point for substrate.

The protein belongs to the Orn/Lys/Arg decarboxylase class-II family. SpeA subfamily. Mg(2+) serves as cofactor. The cofactor is pyridoxal 5'-phosphate.

The enzyme catalyses L-arginine + H(+) = agmatine + CO2. It functions in the pathway amine and polyamine biosynthesis; agmatine biosynthesis; agmatine from L-arginine: step 1/1. In terms of biological role, catalyzes the biosynthesis of agmatine from arginine. This Shewanella woodyi (strain ATCC 51908 / MS32) protein is Biosynthetic arginine decarboxylase.